Here is an 803-residue protein sequence, read N- to C-terminus: Phenylalanine--tRNA ligase beta subunit (803 aa).

The 113-residue stretch at 39-151 (SMKFSGIKIG…KNAIIGEDIK (113 aa)) folds into the tRNA-binding domain. Residues 406–482 (PKKILIKLYK…RFYGFEKIPI (77 aa)) form the B5 domain. The Mg(2+) site is built by aspartate 466 and aspartate 470. Positions 707–800 (SDIPFNYRDI…LKKNFLIEIR (94 aa)) constitute an FDX-ACB domain.

The protein belongs to the phenylalanyl-tRNA synthetase beta subunit family. Type 1 subfamily. In terms of assembly, tetramer of two alpha and two beta subunits. Requires Mg(2+) as cofactor.

The protein resides in the cytoplasm. It catalyses the reaction tRNA(Phe) + L-phenylalanine + ATP = L-phenylalanyl-tRNA(Phe) + AMP + diphosphate + H(+). In Wigglesworthia glossinidia brevipalpis, this protein is Phenylalanine--tRNA ligase beta subunit.